The primary structure comprises 77 residues: Conotoxin Vc1 (77 aa).

The N-terminal stretch at 1–22 is a signal peptide; that stretch reads MRTSGRLLLLCLAVGLLLESQA. 2 consecutive propeptides follow at residues 23–58 and 73–77; these read HPNA…KGQR and RRSFY.

Belongs to the conotoxin H superfamily. As to expression, expressed by the venom duct.

Its subcellular location is the secreted. Probable toxin. This Conus victoriae (Queen Victoria cone) protein is Conotoxin Vc1.